Reading from the N-terminus, the 284-residue chain is Halorhodopsin (284 aa).

The Extracellular portion of the chain corresponds to methionine 1–serine 30. The chain crosses the membrane as a helical span at residues aspartate 31 to glycine 56. Residues arginine 57–proline 62 are Cytoplasmic-facing. The chain crosses the membrane as a helical span at residues arginine 63 to valine 86. Residues serine 87–proline 110 lie on the Extracellular side of the membrane. A helical membrane pass occupies residues tryptophan 111–alanine 132. The Cytoplasmic segment spans residues glycine 133–asparagine 135. The helical transmembrane segment at threonine 136–threonine 159 threads the bilayer. At threonine 160–serine 162 the chain is on the extracellular side. Residues tyrosine 163–leucine 185 traverse the membrane as a helical segment. The Cytoplasmic segment spans residues alanine 186–threonine 197. A helical transmembrane segment spans residues alanine 198–leucine 221. Topologically, residues glycine 222–aspartate 230 are extracellular. A helical transmembrane segment spans residues valine 231–asparagine 259. Lysine 246 bears the N6-(retinylidene)lysine mark. Residues asparagine 260–aspartate 284 are Cytoplasmic-facing.

The protein belongs to the archaeal/bacterial/fungal opsin family.

It is found in the cell membrane. Functionally, light-driven chloride pump. In Halobacterium sp. (strain SG1), this protein is Halorhodopsin (hop).